Reading from the N-terminus, the 546-residue chain is Chaperonin GroEL (546 aa).

Residues 30 to 33, Lys-51, 87 to 91, Gly-415, 479 to 481, and Asp-495 contribute to the ATP site; these read TLGP, DGTTT, and NAA.

The protein belongs to the chaperonin (HSP60) family. In terms of assembly, forms a cylinder of 14 subunits composed of two heptameric rings stacked back-to-back. Interacts with the co-chaperonin GroES.

The protein localises to the cytoplasm. It carries out the reaction ATP + H2O + a folded polypeptide = ADP + phosphate + an unfolded polypeptide.. Together with its co-chaperonin GroES, plays an essential role in assisting protein folding. The GroEL-GroES system forms a nano-cage that allows encapsulation of the non-native substrate proteins and provides a physical environment optimized to promote and accelerate protein folding. The chain is Chaperonin GroEL from Xanthomonas axonopodis pv. citri (strain 306).